Consider the following 293-residue polypeptide: Nucleotide-binding protein cauri_1197 (293 aa).

16–23 (GMSGGGLT) contributes to the ATP binding site. 67-70 (DVRS) is a binding site for GTP.

Belongs to the RapZ-like family.

In terms of biological role, displays ATPase and GTPase activities. This Corynebacterium aurimucosum (strain ATCC 700975 / DSM 44827 / CIP 107346 / CN-1) (Corynebacterium nigricans) protein is Nucleotide-binding protein cauri_1197.